The following is a 151-amino-acid chain: Peptide methionine sulfoxide reductase MsrB (151 aa).

A MsrB domain is found at 5-127 (KEERLKQLTR…NSAALRFVPK (123 aa)). Residue Cys-116 is the Nucleophile of the active site.

The protein belongs to the MsrB Met sulfoxide reductase family.

The enzyme catalyses L-methionyl-[protein] + [thioredoxin]-disulfide + H2O = L-methionyl-(R)-S-oxide-[protein] + [thioredoxin]-dithiol. The sequence is that of Peptide methionine sulfoxide reductase MsrB from Bacillus licheniformis (strain ATCC 14580 / DSM 13 / JCM 2505 / CCUG 7422 / NBRC 12200 / NCIMB 9375 / NCTC 10341 / NRRL NRS-1264 / Gibson 46).